The sequence spans 217 residues: MLDRFIPEFDRALRAVAGVTRASRPNPADAVIASAASTNTADNATKLSEADRRHAAGLMRVNHVGEVCAQALYQGQALFARDPAIRTQLDEAAREEEDHLAWCAQRLQELNDRPSLLNPLWYAGAFAIGAVAGRLGDKISLGFVAETERQVEHHLDGHLDTLPEQDTRSRAIVAQMRDDEIRHGDNARQAGGIDLPAPIRQAMRAASRVMTTAAYRI.

Glu-66, Glu-96, His-99, Glu-148, Glu-180, and His-183 together coordinate Fe cation.

Belongs to the COQ7 family. Requires Fe cation as cofactor.

The protein localises to the cell membrane. The catalysed reaction is a 5-methoxy-2-methyl-3-(all-trans-polyprenyl)benzene-1,4-diol + AH2 + O2 = a 3-demethylubiquinol + A + H2O. Its pathway is cofactor biosynthesis; ubiquinone biosynthesis. Catalyzes the hydroxylation of 2-nonaprenyl-3-methyl-6-methoxy-1,4-benzoquinol during ubiquinone biosynthesis. In Ralstonia pickettii (strain 12J), this protein is 3-demethoxyubiquinol 3-hydroxylase.